Reading from the N-terminus, the 110-residue chain is MKKKLSVLFTVFSFFVIGFAQIAFAADLDNGEKVFSANCAACHAGGNNAIMPDKTLKKDVLEANSMNTIDAITYQVQNGKNAMPAFGGRLVDEDIEDAANYVLSQSEKGW.

An N-terminal signal peptide occupies residues 1-25 (MKKKLSVLFTVFSFFVIGFAQIAFA). Heme c is bound by residues C39, C42, H43, and M83.

This sequence belongs to the cytochrome c family. PetJ subfamily. In terms of assembly, monomer. Binds 1 heme c group covalently per subunit.

It is found in the plastid. The protein resides in the chloroplast thylakoid lumen. Its function is as follows. Functions as an electron carrier between membrane-bound cytochrome b6-f and photosystem I in oxygenic photosynthesis. In Pyropia yezoensis (Susabi-nori), this protein is Cytochrome c6 (petJ).